The following is a 95-amino-acid chain: RING finger protein Z (95 aa).

Gly-2 carries N-myristoyl glycine; by host lipidation. The RING-type; atypical zinc-finger motif lies at 38–74 (CKRCWFATKGLIACSDHYLCLNCLTIMLSDGNFCEVC). The short motif at 88–91 (PSAP) is the PTAP/PSAP motif element.

It belongs to the arenaviridae Z protein family. Interacts with protein NP; this interaction probably directs the encapsidated genome to budding sites. Interacts (via RING domain) with polymerase L; this interaction inhibits viral transcription and replication, Z partially blocks the product exit tunnel for the releasing nascent RNA product. Interacts with the glycoprotein complex; this interaction plays a role in virion budding. Interacts with host eIF4E; this interaction results in eIF4E reduced affinity for its substrate, the 5'-m7 G cap structure. Interacts (via late-budding domain) with host TSG101; this interaction is essential for budding and release of viral particles. Interacts with host RPLP0; this interaction may serve to load ribosome-like particles inside the virion. Interacts with host PML; this interaction induces PML bodies redistribution in the cytoplasm upon viral infection. Post-translationally, myristoylation is required for the role of RING finger protein Z in assembly and budding.

The protein resides in the virion. The protein localises to the host cytoplasm. It localises to the host perinuclear region. Its subcellular location is the host cell membrane. In terms of biological role, plays a crucial role in virion assembly and budding. Expressed late in the virus life cycle, it acts as an inhibitor of viral transcription and RNA synthesis by interacting with the viral polymerase L. Presumably recruits the NP encapsidated genome to cellular membranes at budding sites via direct interaction with NP. Plays critical roles in the final steps of viral release by interacting with host TSG101, a member of the vacuolar protein-sorting pathway and using other cellular host proteins involved in vesicle formation pathway. The budding of the virus progeny occurs after association of protein Z with the viral glycoprotein complex SSP-GP1-GP2 at the cell periphery, step that requires myristoylation of protein Z. Also selectively represses protein production by associating with host eIF4E. In cell-based minigenome assay, has an inhibitory effect on the ribonucleoprotein machinery (vRNP), which is responsible for the replication and transcription of the viral genome. The protein is RING finger protein Z of Sooretamys angouya (Paraguayan rice rat).